The primary structure comprises 496 residues: Probable glycine dehydrogenase (decarboxylating) subunit 2 (496 aa).

Residue Lys-265 is modified to N6-(pyridoxal phosphate)lysine.

The protein belongs to the GcvP family. C-terminal subunit subfamily. The glycine cleavage system is composed of four proteins: P, T, L and H. In this organism, the P 'protein' is a heterodimer of two subunits. It depends on pyridoxal 5'-phosphate as a cofactor.

The enzyme catalyses N(6)-[(R)-lipoyl]-L-lysyl-[glycine-cleavage complex H protein] + glycine + H(+) = N(6)-[(R)-S(8)-aminomethyldihydrolipoyl]-L-lysyl-[glycine-cleavage complex H protein] + CO2. The glycine cleavage system catalyzes the degradation of glycine. The P protein binds the alpha-amino group of glycine through its pyridoxal phosphate cofactor; CO(2) is released and the remaining methylamine moiety is then transferred to the lipoamide cofactor of the H protein. In Thioalkalivibrio sulfidiphilus (strain HL-EbGR7), this protein is Probable glycine dehydrogenase (decarboxylating) subunit 2.